The following is a 245-amino-acid chain: Uridylate kinase (245 aa).

Lys-12–Gly-15 contacts ATP. Position 55 (Gly-55) interacts with UMP. Positions 56 and 60 each coordinate ATP. UMP contacts are provided by residues Asp-76 and Ala-137–Thr-144. ATP-binding residues include Thr-164, Tyr-171, and Asp-174.

Belongs to the UMP kinase family. In terms of assembly, homohexamer.

The protein resides in the cytoplasm. It catalyses the reaction UMP + ATP = UDP + ADP. Its pathway is pyrimidine metabolism; CTP biosynthesis via de novo pathway; UDP from UMP (UMPK route): step 1/1. With respect to regulation, inhibited by UTP. In terms of biological role, catalyzes the reversible phosphorylation of UMP to UDP. The chain is Uridylate kinase from Chlamydia trachomatis serovar A (strain ATCC VR-571B / DSM 19440 / HAR-13).